Reading from the N-terminus, the 66-residue chain is Large ribosomal subunit protein bL35 (66 aa).

Belongs to the bacterial ribosomal protein bL35 family.

The polypeptide is Large ribosomal subunit protein bL35 (Jannaschia sp. (strain CCS1)).